A 704-amino-acid chain; its full sequence is Polyribonucleotide nucleotidyltransferase (704 aa).

Positions 488 and 494 each coordinate Mg(2+). Positions 555–614 constitute a KH domain; that stretch reads PRITTIKINPEKIRDVIGKGGATIRALTEETGTTIELDDDGTVKIASSNGEATKEAIRRI. Residues 624-692 form the S1 motif domain; sequence GTVYNGKVVR…RQGRVRLSMK (69 aa).

This sequence belongs to the polyribonucleotide nucleotidyltransferase family. As to quaternary structure, component of the RNA degradosome, which is a multiprotein complex involved in RNA processing and mRNA degradation. Requires Mg(2+) as cofactor.

Its subcellular location is the cytoplasm. It catalyses the reaction RNA(n+1) + phosphate = RNA(n) + a ribonucleoside 5'-diphosphate. Functionally, involved in mRNA degradation. Catalyzes the phosphorolysis of single-stranded polyribonucleotides processively in the 3'- to 5'-direction. The polypeptide is Polyribonucleotide nucleotidyltransferase (Shewanella halifaxensis (strain HAW-EB4)).